Here is a 446-residue protein sequence, read N- to C-terminus: High mobility group B protein 13 (446 aa).

2 disordered regions span residues 1–43 (MSTV…TKSF) and 110–130 (LAQT…AETK). Residues 11 to 22 (AKKSRNSRKALK) show a composition bias toward basic residues. 2 DNA-binding regions (HMG box) span residues 129-197 (TKRP…TKEK) and 246-312 (PKQP…EGYK). Basic and acidic residues predominate over residues 349–371 (NIIKKTKETAKNKKKNENVDPNK). Residues 349 to 377 (NIIKKTKETAKNKKKNENVDPNKPKKPTS) are disordered. The segment at residues 372–440 (PKKPTSSYFL…AYKKEVEEYN (69 aa)) is a DNA-binding region (HMG box 3).

This sequence belongs to the HMGB family.

It localises to the nucleus. This Arabidopsis thaliana (Mouse-ear cress) protein is High mobility group B protein 13 (HMGB13).